The sequence spans 327 residues: Phenylalanine--tRNA ligase alpha subunit (327 aa).

Glutamate 252 contacts Mg(2+).

Belongs to the class-II aminoacyl-tRNA synthetase family. Phe-tRNA synthetase alpha subunit type 1 subfamily. As to quaternary structure, tetramer of two alpha and two beta subunits. Mg(2+) is required as a cofactor.

It is found in the cytoplasm. It carries out the reaction tRNA(Phe) + L-phenylalanine + ATP = L-phenylalanyl-tRNA(Phe) + AMP + diphosphate + H(+). This Vibrio cholerae serotype O1 (strain ATCC 39541 / Classical Ogawa 395 / O395) protein is Phenylalanine--tRNA ligase alpha subunit.